Consider the following 271-residue polypeptide: uncharacterized protein (271 aa).

An AB hydrolase-1 domain is found at 24–124 (PIILLVHGGG…QVHVMIPHEP (101 aa)).

This sequence belongs to the AB hydrolase superfamily.

This is an uncharacterized protein from Bacillus subtilis (strain 168).